Here is a 51-residue protein sequence, read N- to C-terminus: uncharacterized protein (51 aa).

This is an uncharacterized protein from Saccharomyces cerevisiae (strain ATCC 204508 / S288c) (Baker's yeast).